The sequence spans 140 residues: ATP synthase epsilon chain (140 aa).

It belongs to the ATPase epsilon chain family. In terms of assembly, F-type ATPases have 2 components, CF(1) - the catalytic core - and CF(0) - the membrane proton channel. CF(1) has five subunits: alpha(3), beta(3), gamma(1), delta(1), epsilon(1). CF(0) has three main subunits: a, b and c.

It localises to the cell inner membrane. Produces ATP from ADP in the presence of a proton gradient across the membrane. The chain is ATP synthase epsilon chain from Janthinobacterium sp. (strain Marseille) (Minibacterium massiliensis).